The chain runs to 362 residues: 3-dehydroquinate synthase (362 aa).

NAD(+) is bound by residues 71 to 76 (DGEKYK), 105 to 109 (GVIGD), 129 to 130 (TT), K142, and K151. Zn(2+) is bound by residues E184, H248, and H265.

The protein belongs to the sugar phosphate cyclases superfamily. Dehydroquinate synthase family. Co(2+) is required as a cofactor. Zn(2+) serves as cofactor. The cofactor is NAD(+).

Its subcellular location is the cytoplasm. It catalyses the reaction 7-phospho-2-dehydro-3-deoxy-D-arabino-heptonate = 3-dehydroquinate + phosphate. The protein operates within metabolic intermediate biosynthesis; chorismate biosynthesis; chorismate from D-erythrose 4-phosphate and phosphoenolpyruvate: step 2/7. In terms of biological role, catalyzes the conversion of 3-deoxy-D-arabino-heptulosonate 7-phosphate (DAHP) to dehydroquinate (DHQ). This chain is 3-dehydroquinate synthase, found in Hamiltonella defensa subsp. Acyrthosiphon pisum (strain 5AT).